A 339-amino-acid chain; its full sequence is tRNA N6-adenosine threonylcarbamoyltransferase (339 aa).

The Fe cation site is built by His114 and His118. Residues 137–141, Asp170, Gly183, Asp187, and Asn277 each bind substrate; that span reads VVSGG. Asp305 provides a ligand contact to Fe cation.

It belongs to the KAE1 / TsaD family. The cofactor is Fe(2+).

The protein resides in the cytoplasm. The enzyme catalyses L-threonylcarbamoyladenylate + adenosine(37) in tRNA = N(6)-L-threonylcarbamoyladenosine(37) in tRNA + AMP + H(+). Required for the formation of a threonylcarbamoyl group on adenosine at position 37 (t(6)A37) in tRNAs that read codons beginning with adenine. Is involved in the transfer of the threonylcarbamoyl moiety of threonylcarbamoyl-AMP (TC-AMP) to the N6 group of A37, together with TsaE and TsaB. TsaD likely plays a direct catalytic role in this reaction. The polypeptide is tRNA N6-adenosine threonylcarbamoyltransferase (Clostridium perfringens (strain ATCC 13124 / DSM 756 / JCM 1290 / NCIMB 6125 / NCTC 8237 / Type A)).